Consider the following 141-residue polypeptide: Putative antirestriction protein YubI (141 aa).

It belongs to the antirestriction protein family.

The sequence is that of Putative antirestriction protein YubI (yubI) from Escherichia coli (strain K12).